Reading from the N-terminus, the 591-residue chain is Oxaloacetate decarboxylase alpha chain (591 aa).

In terms of domain architecture, Pyruvate carboxyltransferase spans 3–263; the sequence is IAITDVVLRD…DTGLDILKLE (261 aa). A Biotinyl-binding domain is found at 518 to 591; it reads PAGAGTPVTA…SVGDTLMTLA (74 aa). Lys-557 carries the post-translational modification N6-biotinyllysine.

Composed of three chains (alpha, beta, and gamma). It depends on biotin as a cofactor.

It catalyses the reaction oxaloacetate + 2 Na(+)(in) + H(+) = pyruvate + 2 Na(+)(out) + CO2. Its function is as follows. Catalyzes the decarboxylation of oxaloacetate coupled to Na(+) translocation. The polypeptide is Oxaloacetate decarboxylase alpha chain (oadA1) (Salmonella typhi).